The sequence spans 304 residues: L-lactate dehydrogenase (304 aa).

NAD(+)-binding positions include Val11, Asp32, Arg37, and 76–77; that span reads GA. Residues Gln79, Arg85, and 117–120 each bind substrate; that span reads NPVD. Ser138 lines the NAD(+) pocket. 143–146 provides a ligand contact to substrate; the sequence is DSAR. The beta-D-fructose 1,6-bisphosphate site is built by Arg148 and His163. The active-site Proton acceptor is the His170. A substrate-binding site is contributed by Thr225.

Belongs to the LDH/MDH superfamily. LDH family. As to quaternary structure, homotetramer.

It is found in the cytoplasm. It carries out the reaction (S)-lactate + NAD(+) = pyruvate + NADH + H(+). Its pathway is fermentation; pyruvate fermentation to lactate; (S)-lactate from pyruvate: step 1/1. With respect to regulation, allosterically activated by fructose 1,6-bisphosphate (FBP). Its function is as follows. Catalyzes the conversion of lactate to pyruvate. The polypeptide is L-lactate dehydrogenase (Deinococcus radiodurans (strain ATCC 13939 / DSM 20539 / JCM 16871 / CCUG 27074 / LMG 4051 / NBRC 15346 / NCIMB 9279 / VKM B-1422 / R1)).